The primary structure comprises 440 residues: D-serine dehydratase (440 aa).

Position 116 is an N6-(pyridoxal phosphate)lysine (Lys-116).

Belongs to the serine/threonine dehydratase family. DsdA subfamily. As to quaternary structure, monomer. It depends on pyridoxal 5'-phosphate as a cofactor.

The catalysed reaction is D-serine = pyruvate + NH4(+). The protein is D-serine dehydratase of Salmonella agona (strain SL483).